Consider the following 583-residue polypeptide: Sphingomyelin phosphodiesterase A (583 aa).

Residues 1 to 21 form the signal peptide; sequence MKSIPIILLVLIGLLLASVYS. The Saposin B-type domain maps to 51 to 133; it reads IQLSCDVCQI…GYFKICSATG (83 aa). 3 disulfides stabilise this stretch: Cys-55–Cys-129, Cys-58–Cys-123, and Cys-86–Cys-97. Asn-72 carries N-linked (GlcNAc...) asparagine glycosylation. An N-linked (GlcNAc...) asparagine glycan is attached at Asn-182. Zn(2+) is bound by residues Asp-193 and His-195. Cys-214 and Cys-229 are disulfide-bonded. Zn(2+)-binding residues include Asp-258 and Asn-298. An N-linked (GlcNAc...) asparagine glycan is attached at Asn-377. The Zn(2+) site is built by His-401, His-436, and His-438. N-linked (GlcNAc...) asparagine glycans are attached at residues Asn-495, Asn-500, Asn-537, and Asn-547. An intrachain disulfide couples Cys-567 to Cys-580.

It belongs to the acid sphingomyelinase family. The cofactor is Zn(2+).

The protein localises to the secreted. Functionally, converts sphingomyelin to ceramide. The protein is Sphingomyelin phosphodiesterase A (sgmA) of Dictyostelium discoideum (Social amoeba).